We begin with the raw amino-acid sequence, 424 residues long: Hemagglutinin-esterase (424 aa).

A signal peptide spans 1–16 (MFLLPRFVLVSCIIGS). Residues 7 to 127 (FVLVSCIIGS…SNDIWMQNKG (121 aa)) are esterase domain 1. The Virion surface segment spans residues 17–392 (LGFDNPPTNV…PICVYDPLPI (376 aa)). Residue Ser-40 is the Nucleophile of the active site. A disulfide bridge connects residues Cys-44 and Cys-65. Residues Asn-54, Asn-89, Asn-153, Asn-236, and Asn-301 are each glycosylated (N-linked (GlcNAc...) asparagine; by host). 3 disulfide bridges follow: Cys-113–Cys-162, Cys-197–Cys-276, and Cys-205–Cys-249. The tract at residues 128-266 (LFYTQLYKNM…GNYLAISNEL (139 aa)) is receptor binding. An esterase domain 2 region spans residues 267-379 (LLTVPTKAIC…RCPTAADINT (113 aa)). Residues Cys-307 and Cys-312 are joined by a disulfide bond. A glycan (N-linked (GlcNAc...) asparagine; by host) is linked at Asn-316. Catalysis depends on charge relay system residues Asp-326 and His-329. A disulfide bridge connects residues Cys-347 and Cys-371. Asn-358 carries an N-linked (GlcNAc...) asparagine; by host glycan. A helical transmembrane segment spans residues 393–413 (ILLGILLGVAVIIIVVLLLYF). Residues 414 to 424 (MVDNGTRLHDA) lie on the Intravirion side of the membrane. Asn-417 carries an N-linked (GlcNAc...) asparagine; by host glycan.

The protein belongs to the influenza type C/coronaviruses hemagglutinin-esterase family. Homodimer; disulfide-linked. Forms a complex with the M protein in the pre-Golgi. Associates then with S-M complex to form a ternary complex S-M-HE. Post-translationally, N-glycosylated in the host RER.

Its subcellular location is the virion membrane. The protein resides in the host cell membrane. It carries out the reaction N-acetyl-9-O-acetylneuraminate + H2O = N-acetylneuraminate + acetate + H(+). The catalysed reaction is N-acetyl-4-O-acetylneuraminate + H2O = N-acetylneuraminate + acetate + H(+). Its function is as follows. Structural protein that makes short spikes at the surface of the virus. Contains receptor binding and receptor-destroying activities. Mediates de-O-acetylation of N-acetyl-4-O-acetylneuraminic acid, which is probably the receptor determinant recognized by the virus on the surface of erythrocytes and susceptible cells. This receptor-destroying activity is important for virus release as it probably helps preventing self-aggregation and ensures the efficient spread of the progeny virus from cell to cell. May serve as a secondary viral attachment protein for initiating infection, the spike protein being the major one. May become a target for both the humoral and the cellular branches of the immune system. This chain is Hemagglutinin-esterase, found in Bovine coronavirus (strain LSU-94LSS-051) (BCoV-LSU).